The sequence spans 174 residues: NADH-ubiquinone oxidoreductase chain 6 (174 aa).

Helical transmembrane passes span 1-21 (MTYV…GFSS), 24-44 (SPIY…AIIL), 47-67 (GGGY…MVVF), 86-106 (VEVL…VLWV), and 151-171 (WLVV…IEIA).

The protein belongs to the complex I subunit 6 family. In terms of assembly, core subunit of respiratory chain NADH dehydrogenase (Complex I) which is composed of 45 different subunits.

It localises to the mitochondrion inner membrane. It catalyses the reaction a ubiquinone + NADH + 5 H(+)(in) = a ubiquinol + NAD(+) + 4 H(+)(out). Its function is as follows. Core subunit of the mitochondrial membrane respiratory chain NADH dehydrogenase (Complex I) which catalyzes electron transfer from NADH through the respiratory chain, using ubiquinone as an electron acceptor. Essential for the catalytic activity and assembly of complex I. The chain is NADH-ubiquinone oxidoreductase chain 6 (MT-ND6) from Gorilla gorilla gorilla (Western lowland gorilla).